The following is a 66-amino-acid chain: Conotoxin Cl14.1a (66 aa).

Residues 1–19 form the signal peptide; it reads MNVTAMFIVLLLTMPLTDG. A propeptide spanning residues 20 to 49 is cleaved from the precursor; it reads FNIRAINGGELFGLVQRDAGNALDHGFYRR.

This sequence belongs to the conotoxin L superfamily. Post-translationally, contains 2 disulfide bonds. Expressed by the venom duct.

The protein localises to the secreted. Functionally, probable neurotoxin with unknown target. Possibly targets ion channels. This peptide could be considered as an apoptosis activator in some cancers (tested on lung and breast cancer cell lines). Provokes the decrease of H1299 lung cancer cells viability after 24 hours treatment, and induces a high Bax/Bcl-2 ratio, which suggests that this peptide can activate apoptosis in H1299 cells. In addition, H1299 and H1437 lung cancer cell lines treated with this peptide have decreased cell viability, activated caspases, and reduced expression of the pro-survival protein NF-kappa-B (NFKB1), indicating activation of apoptosis. In synergy with MicroRNA-101-3p, this synthetic peptide inhibits breast cancer cells (SK-BR-3 and MCF-7) migration, invasion, and proliferation through suppressing the expression of the methyltransferase EZH2. In parallel, this synergy treatment is able to promote the apoptosis of breast cancer cells. Against microbes, this synthetic toxin (at micromolar concentrations) lowers viability and inhibits host cell invasion by the opportunistic parasite Toxoplasma gondii (tachyzoite form). In addition, it permits T.gondii intracellular replication to decrease while viability of the host cell is unaffected. This chain is Conotoxin Cl14.1a, found in Californiconus californicus (California cone).